Here is a 266-residue protein sequence, read N- to C-terminus: Exosome complex component Rrp42 (266 aa).

It belongs to the RNase PH family. Rrp42 subfamily. In terms of assembly, component of the archaeal exosome complex. Forms a hexameric ring-like arrangement composed of 3 Rrp41-Rrp42 heterodimers. The hexameric ring associates with a trimer of Rrp4 and/or Csl4 subunits.

It is found in the cytoplasm. Functionally, non-catalytic component of the exosome, which is a complex involved in RNA degradation. Contributes to the structuring of the Rrp41 active site. The protein is Exosome complex component Rrp42 of Methanosarcina mazei (strain ATCC BAA-159 / DSM 3647 / Goe1 / Go1 / JCM 11833 / OCM 88) (Methanosarcina frisia).